The sequence spans 349 residues: tRNA pseudouridine synthase D (349 aa).

Residue Phe27 participates in substrate binding. The active-site Nucleophile is the Asp80. A substrate-binding site is contributed by Asn129. Positions 155 to 303 (GVPNYFGAQR…VEAARRAMLL (149 aa)) constitute a TRUD domain. Residue Phe329 participates in substrate binding.

Belongs to the pseudouridine synthase TruD family.

It catalyses the reaction uridine(13) in tRNA = pseudouridine(13) in tRNA. In terms of biological role, responsible for synthesis of pseudouridine from uracil-13 in transfer RNAs. The sequence is that of tRNA pseudouridine synthase D from Escherichia coli O7:K1 (strain IAI39 / ExPEC).